Consider the following 695-residue polypeptide: uncharacterized protein (695 aa).

2 disordered regions span residues 1-112 (MSRL…KHKK) and 242-262 (MKKVSQQLKPQKNTNDSNNDH). A compositionally biased stretch (low complexity) spans 32 to 47 (DSSSSSDSPNFFPSSS). Over residues 96–107 (KTEKEKEKEPIQ) the composition is skewed to basic and acidic residues. Residues 278–492 (KPRTKLLLLG…KIDKEADTNH (215 aa)) enclose the tr-type G domain. Residues 287–294 (GPPKSGKK), 357–361 (IFTTN), and 417–420 (TKMD) each bind GTP.

Belongs to the TRAFAC class translation factor GTPase superfamily. Classic translation factor GTPase family.

Its subcellular location is the cytoplasm. The protein resides in the nucleus. This is an uncharacterized protein from Schizosaccharomyces pombe (strain 972 / ATCC 24843) (Fission yeast).